Here is a 475-residue protein sequence, read N- to C-terminus: Mitochondrial adenyl nucleotide antiporter SLC25A24 (475 aa).

Residues 1–173 form a regulatory N-terminal domain region; that stretch reads MLRWLRGFVL…RFWKHSTGID (173 aa). Residues 1–197 lie on the Mitochondrial intermembrane side of the membrane; it reads MLRWLRGFVL…ERKSGQWWRQ (197 aa). EF-hand domains follow at residues 19 to 54, 55 to 88, 86 to 121, and 122 to 157; these read EPPTRYETLFQALDRNGDGVVDIRELQEGLKSLGIP, LGQDAEEKIFTTGDVNKDGKLDFEEFMKYLKDHE, DHEKKMKLAFKSLDKNNDGKIEASEIVQSLQTLGLT, and ISEQQAELILQSIDADGTMTVDWNEWRDYFLFNPVA. D32, N34, D36, V38, E43, D68, N70, D72, K74, E79, D99, N101, D103, K105, E110, D135, D137, T139, T141, and E146 together coordinate Ca(2+). Residues 159–168 are linker region; the sequence is IEEIIRFWKH. A C-terminal transmembrane transporter domain region spans residues 174-475; that stretch reads IGDSLTIPDE…MKQTLGVTQK (302 aa). 3 Solcar repeats span residues 192 to 276, 284 to 369, and 381 to 469; these read GQWW…YKKL, IGTF…LKSH, and PGVL…MKQT. Residues 198 to 215 traverse the membrane as a helical segment; sequence LLAGGIAGAVSRTSTAPL. The Mitochondrial matrix portion of the chain corresponds to 216 to 250; that stretch reads DRLKVMMQVHGSKSMNIFGGFRQMIKEGGVRSLWR. A helical membrane pass occupies residues 251-270; the sequence is GNGTNVIKIAPETAVKFWVY. Over 271 to 293 the chain is Mitochondrial intermembrane; the sequence is EQYKKLLTEEGQKIGTFERFISG. Residues 294–307 form a helical membrane-spanning segment; sequence SMAGATAQTFIYPM. Residues 308–343 are Mitochondrial matrix-facing; it reads EVMKTRLAVGKTGQYSGIYDCAKKILKYEGFGAFYK. The residue at position 318 (K318) is an N6-acetyllysine; alternate. At K318 the chain carries N6-succinyllysine; alternate. The residue at position 334 (K334) is an N6-acetyllysine. The chain crosses the membrane as a helical span at residues 344–363; it reads GYVPNLLGIIPYAGIDLAVY. At 364–386 the chain is on the mitochondrial intermembrane side; it reads ELLKSHWLDNFAKDSVNPGVLVL. Residues 387–404 form a helical membrane-spanning segment; it reads LGCGALSSTCGQLASYPL. At 405-443 the chain is on the mitochondrial matrix side; it reads ALVRTRMQAQAMLEGAPQLNMVGLFRRIISKEGLPGLYR. N6-acetyllysine; alternate is present on K435. An N6-succinyllysine; alternate modification is found at K435. A helical membrane pass occupies residues 444–463; the sequence is GITPNFMKVLPAVGISYVVY. Residues 464-475 lie on the Mitochondrial intermembrane side of the membrane; sequence ENMKQTLGVTQK.

Belongs to the mitochondrial carrier (TC 2.A.29) family. Monomer. In terms of tissue distribution, mainly expressed in colon. Also expressed in the small intestine proximal to the ileum. Weakly expressed in kidney but not in the liver.

Its subcellular location is the mitochondrion inner membrane. The protein localises to the peroxisome membrane. The catalysed reaction is Mg(2+)(out) + phosphate(in) + ATP(out) = Mg(2+)(in) + phosphate(out) + ATP(in). It catalyses the reaction ADP(out) + phosphate(in) + H(+)(out) = ADP(in) + phosphate(out) + H(+)(in). The enzyme catalyses AMP(out) + phosphate(in) = AMP(in) + phosphate(out). It carries out the reaction phosphate(in) + ATP(out) + 2 H(+)(out) = phosphate(out) + ATP(in) + 2 H(+)(in). The catalysed reaction is dADP(in) + ADP(out) = dADP(out) + ADP(in). It catalyses the reaction Mg(2+)(in) + ADP(out) + ATP(in) + H(+)(out) = Mg(2+)(out) + ADP(in) + ATP(out) + H(+)(in). The enzyme catalyses ADP(out) + diphosphate(in) = ADP(in) + diphosphate(out). It carries out the reaction dAMP(in) + ADP(out) + H(+)(out) = dAMP(out) + ADP(in) + H(+)(in). The catalysed reaction is 3'-AMP(in) + ADP(out) + H(+)(out) = 3'-AMP(out) + ADP(in) + H(+)(in). It catalyses the reaction dAMP(out) + phosphate(in) = dAMP(in) + phosphate(out). The enzyme catalyses 3'-AMP(out) + phosphate(in) = 3'-AMP(in) + phosphate(out). It carries out the reaction dADP(out) + phosphate(in) + H(+)(out) = dADP(in) + phosphate(out) + H(+)(in). Activated by an increase in cytosolic calcium levels that induce a conformational change of the N-terminal regulatory domain, uncapping the channel and allowing transport. Inhibited by bathophenanthroline, mersalyl, p-hydroxymercuribenzoate, bromcresol purple and tannic acid. In terms of biological role, electroneutral antiporter that mediates the transport of adenyl nucleotides through the inner mitochondrial membrane. Originally identified as an ATP-magnesium/inorganic phosphate antiporter, it also acts as a broad specificity adenyl nucleotide antiporter. By regulating the mitochondrial matrix adenyl nucleotide pool could adapt to changing cellular energetic demands and indirectly regulate adenyl nucleotide-dependent metabolic pathways. In vitro, a low activity is also observed with guanyl and pyrimidine nucleotides. May play a role in protecting cells against oxidative stress-induced cell death, by buffering calcium levels in the mitochondrial matrix through the formation of calcium-phosphate precipitates. The polypeptide is Mitochondrial adenyl nucleotide antiporter SLC25A24 (SLC25A24) (Oryctolagus cuniculus (Rabbit)).